The sequence spans 492 residues: Cytochrome P450 2A2 (492 aa).

Residue cysteine 437 coordinates heme.

Belongs to the cytochrome P450 family. Heme serves as cofactor. In terms of tissue distribution, liver specific.

It is found in the endoplasmic reticulum membrane. The protein resides in the microsome membrane. It carries out the reaction an organic molecule + reduced [NADPH--hemoprotein reductase] + O2 = an alcohol + oxidized [NADPH--hemoprotein reductase] + H2O + H(+). Its function is as follows. Highly active in the 15-alpha-hydroxylation of testosterone. This Rattus norvegicus (Rat) protein is Cytochrome P450 2A2 (Cyp2a2).